Here is a 278-residue protein sequence, read N- to C-terminus: Tryptophan synthase alpha chain (278 aa).

Catalysis depends on proton acceptor residues E50 and D61.

Belongs to the TrpA family. As to quaternary structure, tetramer of two alpha and two beta chains.

The enzyme catalyses (1S,2R)-1-C-(indol-3-yl)glycerol 3-phosphate + L-serine = D-glyceraldehyde 3-phosphate + L-tryptophan + H2O. It participates in amino-acid biosynthesis; L-tryptophan biosynthesis; L-tryptophan from chorismate: step 5/5. Its function is as follows. The alpha subunit is responsible for the aldol cleavage of indoleglycerol phosphate to indole and glyceraldehyde 3-phosphate. The polypeptide is Tryptophan synthase alpha chain (Rhodopseudomonas palustris (strain ATCC BAA-98 / CGA009)).